Here is a 131-residue protein sequence, read N- to C-terminus: Ribosome-binding factor A (131 aa).

The protein belongs to the RbfA family. Monomer. Binds 30S ribosomal subunits, but not 50S ribosomal subunits or 70S ribosomes.

Its subcellular location is the cytoplasm. Functionally, one of several proteins that assist in the late maturation steps of the functional core of the 30S ribosomal subunit. Associates with free 30S ribosomal subunits (but not with 30S subunits that are part of 70S ribosomes or polysomes). Required for efficient processing of 16S rRNA. May interact with the 5'-terminal helix region of 16S rRNA. This is Ribosome-binding factor A from Picosynechococcus sp. (strain ATCC 27264 / PCC 7002 / PR-6) (Agmenellum quadruplicatum).